A 313-amino-acid polypeptide reads, in one-letter code: Adhesin MafA 1 (313 aa).

The first 14 residues, 1 to 14 (MKILLLLIPLVLTA), serve as a signal peptide directing secretion. Cysteine 15 carries N-palmitoyl cysteine lipidation. Cysteine 15 carries the S-diacylglycerol cysteine lipid modification. Residues 282 to 298 (GDTTAQNRPDFKQNNGK) are compositionally biased toward polar residues. The tract at residues 282–313 (GDTTAQNRPDFKQNNGKNPDVGNEVIRRRKGG) is disordered.

It belongs to the MafA family.

It is found in the cell outer membrane. This Neisseria meningitidis serogroup C / serotype 2a (strain ATCC 700532 / DSM 15464 / FAM18) protein is Adhesin MafA 1 (mafA1).